The following is a 146-amino-acid chain: Protein disulfide-isomerase 5-1 (146 aa).

The N-terminal stretch at methionine 1–alanine 25 is a signal peptide. Positions glutamate 26–glutamate 133 constitute a Thioredoxin domain. Residues cysteine 55 and cysteine 58 each act as nucleophile in the active site. Cysteine 55 and cysteine 58 form a disulfide bridge.

It belongs to the protein disulfide isomerase family.

Acts as a protein-folding catalyst that interacts with nascent polypeptides to catalyze the formation, isomerization, and reduction or oxidation of disulfide bonds. In Arabidopsis thaliana (Mouse-ear cress), this protein is Protein disulfide-isomerase 5-1 (PDIL5-1).